A 104-amino-acid polypeptide reads, in one-letter code: Met repressor (104 aa).

The protein belongs to the MetJ family. Homodimer.

It is found in the cytoplasm. In terms of biological role, this regulatory protein, when combined with SAM (S-adenosylmethionine) represses the expression of the methionine regulon and of enzymes involved in SAM synthesis. The polypeptide is Met repressor (Shewanella oneidensis (strain ATCC 700550 / JCM 31522 / CIP 106686 / LMG 19005 / NCIMB 14063 / MR-1)).